We begin with the raw amino-acid sequence, 444 residues long: ATP-dependent protease ATPase subunit HslU (444 aa).

ATP-binding positions include I18, 60–65 (GVGKTE), D256, E322, and R394.

It belongs to the ClpX chaperone family. HslU subfamily. A double ring-shaped homohexamer of HslV is capped on each side by a ring-shaped HslU homohexamer. The assembly of the HslU/HslV complex is dependent on binding of ATP.

It is found in the cytoplasm. ATPase subunit of a proteasome-like degradation complex; this subunit has chaperone activity. The binding of ATP and its subsequent hydrolysis by HslU are essential for unfolding of protein substrates subsequently hydrolyzed by HslV. HslU recognizes the N-terminal part of its protein substrates and unfolds these before they are guided to HslV for hydrolysis. This chain is ATP-dependent protease ATPase subunit HslU, found in Serratia proteamaculans (strain 568).